We begin with the raw amino-acid sequence, 205 residues long: Guanylate kinase (205 aa).

In terms of domain architecture, Guanylate kinase-like spans 6–185 (GLLIVLSRPS…ACDRIKAIVV (180 aa)). 13–20 (RPSGVGKG) is an ATP binding site.

Belongs to the guanylate kinase family.

It is found in the cytoplasm. It carries out the reaction GMP + ATP = GDP + ADP. Functionally, essential for recycling GMP and indirectly, cGMP. The sequence is that of Guanylate kinase from Bacillus cereus (strain ATCC 14579 / DSM 31 / CCUG 7414 / JCM 2152 / NBRC 15305 / NCIMB 9373 / NCTC 2599 / NRRL B-3711).